A 93-amino-acid chain; its full sequence is Putative pterin-4-alpha-carbinolamine dehydratase (93 aa).

The protein belongs to the pterin-4-alpha-carbinolamine dehydratase family.

The enzyme catalyses (4aS,6R)-4a-hydroxy-L-erythro-5,6,7,8-tetrahydrobiopterin = (6R)-L-erythro-6,7-dihydrobiopterin + H2O. The protein is Putative pterin-4-alpha-carbinolamine dehydratase of Mycolicibacterium vanbaalenii (strain DSM 7251 / JCM 13017 / BCRC 16820 / KCTC 9966 / NRRL B-24157 / PYR-1) (Mycobacterium vanbaalenii).